A 100-amino-acid chain; its full sequence is Urease subunit gamma (100 aa).

It belongs to the urease gamma subunit family. As to quaternary structure, heterotrimer of UreA (gamma), UreB (beta) and UreC (alpha) subunits. Three heterotrimers associate to form the active enzyme.

It is found in the cytoplasm. The enzyme catalyses urea + 2 H2O + H(+) = hydrogencarbonate + 2 NH4(+). It functions in the pathway nitrogen metabolism; urea degradation; CO(2) and NH(3) from urea (urease route): step 1/1. The polypeptide is Urease subunit gamma (Escherichia coli O157:H7 (strain EC4115 / EHEC)).